Reading from the N-terminus, the 502-residue chain is Mannitol 2-dehydrogenase (502 aa).

37 to 48 lines the NAD(+) pocket; sequence IVHIGVGGFHRA.

Belongs to the mannitol dehydrogenase family. Monomer.

It catalyses the reaction D-mannitol + NAD(+) = D-fructose + NADH + H(+). Its function is as follows. Catalyzes the NAD(H)-dependent interconversion of D-fructose and D-mannitol in the mannitol metabolic pathway. In Emericella nidulans (strain FGSC A4 / ATCC 38163 / CBS 112.46 / NRRL 194 / M139) (Aspergillus nidulans), this protein is Mannitol 2-dehydrogenase.